The sequence spans 423 residues: CinA-like protein (423 aa).

This sequence belongs to the CinA family.

This is CinA-like protein from Synechococcus sp. (strain CC9311).